A 477-amino-acid polypeptide reads, in one-letter code: Exodeoxyribonuclease 7 large subunit (477 aa).

A disordered region spans residues 452–477 (KAAAAPKRVKKSPPPGTSGAQEDLFG).

Belongs to the XseA family. As to quaternary structure, heterooligomer composed of large and small subunits.

The protein resides in the cytoplasm. The catalysed reaction is Exonucleolytic cleavage in either 5'- to 3'- or 3'- to 5'-direction to yield nucleoside 5'-phosphates.. In terms of biological role, bidirectionally degrades single-stranded DNA into large acid-insoluble oligonucleotides, which are then degraded further into small acid-soluble oligonucleotides. The chain is Exodeoxyribonuclease 7 large subunit from Erythrobacter litoralis (strain HTCC2594).